Here is a 391-residue protein sequence, read N- to C-terminus: Heme A synthase (391 aa).

8 helical membrane passes run 37–57, 121–141, 152–172, 186–206, 229–249, 298–318, 332–352, and 354–374; these read IRLW…VGGL, RQLG…FLAA, LLAL…MVAS, LATH…QALL, TTVL…VAGI, FLHR…WIFG, LLAM…LSAA, and WQVA…ILHA. His-300 is a heme binding site. His-360 is a heme binding site.

The protein belongs to the COX15/CtaA family. Type 2 subfamily. In terms of assembly, interacts with CtaB. It depends on heme b as a cofactor.

It is found in the cell membrane. The catalysed reaction is Fe(II)-heme o + 2 A + H2O = Fe(II)-heme a + 2 AH2. The protein operates within porphyrin-containing compound metabolism; heme A biosynthesis; heme A from heme O: step 1/1. Catalyzes the conversion of heme O to heme A by two successive hydroxylations of the methyl group at C8. The first hydroxylation forms heme I, the second hydroxylation results in an unstable dihydroxymethyl group, which spontaneously dehydrates, resulting in the formyl group of heme A. The chain is Heme A synthase from Cereibacter sphaeroides (strain KD131 / KCTC 12085) (Rhodobacter sphaeroides).